Reading from the N-terminus, the 295-residue chain is Acetaldehyde dehydrogenase (295 aa).

11 to 14 (SGNI) lines the NAD(+) pocket. C127 serves as the catalytic Acyl-thioester intermediate. NAD(+) is bound by residues 158-166 (SAGPGTRAN) and N270.

It belongs to the acetaldehyde dehydrogenase family.

The enzyme catalyses acetaldehyde + NAD(+) + CoA = acetyl-CoA + NADH + H(+). The protein is Acetaldehyde dehydrogenase (nbaJ) of Geobacillus thermodenitrificans (strain NG80-2).